A 115-amino-acid polypeptide reads, in one-letter code: Probable non-functional T cell receptor beta variable 23-1 (115 aa).

An N-terminal signal peptide occupies residues 1–21 (MGTRLLGCAALCLLAADSFHA). Positions 22 to 115 (KVTQTPGHLV…TALYLCASSQ (94 aa)) constitute an Ig-like domain. The cysteines at positions 42 and 111 are disulfide-linked.

Alpha-beta TR is a heterodimer composed of an alpha and beta chain; disulfide-linked. The alpha-beta TR is associated with the transmembrane signaling CD3 coreceptor proteins to form the TR-CD3 (TcR or TCR). The assembly of alpha-beta TR heterodimers with CD3 occurs in the endoplasmic reticulum where a single alpha-beta TR heterodimer associates with one CD3D-CD3E heterodimer, one CD3G-CD3E heterodimer and one CD247 homodimer forming a stable octameric structure. CD3D-CD3E and CD3G-CD3E heterodimers preferentially associate with TR alpha and TR beta chains, respectively. The association of the CD247 homodimer is the last step of TcR assembly in the endoplasmic reticulum and is required for transport to the cell surface.

It is found in the cell membrane. Functionally, probable non-functional open reading frame (ORF) of V region of the variable domain of T cell receptor (TR) beta chain. Non-functional ORF generally cannot participate in the synthesis of a productive T cell receptor (TR) chain due to altered V-(D)-J or switch recombination and/or splicing site (at mRNA level) and/or conserved amino acid change (protein level). Alpha-beta T cell receptors are antigen specific receptors which are essential to the immune response and are present on the cell surface of T lymphocytes. Recognize peptide-major histocompatibility (MH) (pMH) complexes that are displayed by antigen presenting cells (APC), a prerequisite for efficient T cell adaptive immunity against pathogens. Binding of alpha-beta TR to pMH complex initiates TR-CD3 clustering on the cell surface and intracellular activation of LCK that phosphorylates the ITAM motifs of CD3G, CD3D, CD3E and CD247 enabling the recruitment of ZAP70. In turn ZAP70 phosphorylates LAT, which recruits numerous signaling molecules to form the LAT signalosome. The LAT signalosome propagates signal branching to three major signaling pathways, the calcium, the mitogen-activated protein kinase (MAPK) kinase and the nuclear factor NF-kappa-B (NF-kB) pathways, leading to the mobilization of transcription factors that are critical for gene expression and essential for T cell growth and differentiation. The T cell repertoire is generated in the thymus, by V-(D)-J rearrangement. This repertoire is then shaped by intrathymic selection events to generate a peripheral T cell pool of self-MH restricted, non-autoaggressive T cells. Post-thymic interaction of alpha-beta TR with the pMH complexes shapes TR structural and functional avidity. The polypeptide is Probable non-functional T cell receptor beta variable 23-1 (Homo sapiens (Human)).